The chain runs to 150 residues: Urease accessory protein UreE (150 aa).

It belongs to the UreE family.

It is found in the cytoplasm. Involved in urease metallocenter assembly. Binds nickel. Probably functions as a nickel donor during metallocenter assembly. The polypeptide is Urease accessory protein UreE (Staphylococcus saprophyticus subsp. saprophyticus (strain ATCC 15305 / DSM 20229 / NCIMB 8711 / NCTC 7292 / S-41)).